The chain runs to 304 residues: Non-specific ribonucleoside hydrolase RihC (304 aa).

Residue H233 is part of the active site.

This sequence belongs to the IUNH family. RihC subfamily.

In terms of biological role, hydrolyzes both purine and pyrimidine ribonucleosides with a broad-substrate specificity. The sequence is that of Non-specific ribonucleoside hydrolase RihC from Shigella dysenteriae serotype 1 (strain Sd197).